We begin with the raw amino-acid sequence, 2837 residues long: Probable polyketide synthase 3 (2837 aa).

One can recognise a Ketosynthase family 3 (KS3) domain in the interval 39-464 (NNGIGIIGIG…GSNVCIILKD (426 aa)). Active-site for beta-ketoacyl synthase activity residues include C209, H348, and H388. The interval 664–697 (GIKPTFIVGHSLGEVTAAYCSGMIDLETECYLIY) is acyl/malonyl transferase. The active-site For acyl/malonyl transferase activity is S674. The segment at 962–1084 (IDILGNSITD…GNFQLFKHNG (123 aa)) is N-terminal hotdog fold. In terms of domain architecture, PKS/mFAS DH spans 962–1255 (IDILGNSITD…CTSLTPIQDS (294 aa)). H995 acts as the Proton acceptor; for dehydratase activity in catalysis. The tract at residues 1106 to 1255 (NLTKLTKEDL…CTSLTPIQDS (150 aa)) is C-terminal hotdog fold. Catalysis depends on D1169, which acts as the Proton donor; for dehydratase activity. Residues 2330–2407 (DNKNSVNQMF…SSIKIITNSL (78 aa)) enclose the Carrier domain. Position 2367 is an O-(pantetheine 4'-phosphoryl)serine (S2367). A helical transmembrane segment spans residues 2464–2484 (KVILLSGSTGFLGGYLLLNLV).

Requires pantetheine 4'-phosphate as cofactor.

The protein localises to the membrane. In terms of biological role, probable polyketide synthase. The protein is Probable polyketide synthase 3 (pks3) of Dictyostelium discoideum (Social amoeba).